Reading from the N-terminus, the 189-residue chain is Large ribosomal subunit protein bL9 (189 aa).

Belongs to the bacterial ribosomal protein bL9 family.

Binds to the 23S rRNA. This is Large ribosomal subunit protein bL9 from Cereibacter sphaeroides (strain ATCC 17023 / DSM 158 / JCM 6121 / CCUG 31486 / LMG 2827 / NBRC 12203 / NCIMB 8253 / ATH 2.4.1.) (Rhodobacter sphaeroides).